The following is a 430-amino-acid chain: Histidinol dehydrogenase (430 aa).

NAD(+) contacts are provided by Y129, Q190, and N213. Substrate contacts are provided by S236, Q258, and H261. Positions 258 and 261 each coordinate Zn(2+). Active-site proton acceptor residues include E326 and H327. Positions 327, 360, 414, and 419 each coordinate substrate. D360 is a binding site for Zn(2+). H419 serves as a coordination point for Zn(2+).

This sequence belongs to the histidinol dehydrogenase family. Zn(2+) serves as cofactor.

It carries out the reaction L-histidinol + 2 NAD(+) + H2O = L-histidine + 2 NADH + 3 H(+). It functions in the pathway amino-acid biosynthesis; L-histidine biosynthesis; L-histidine from 5-phospho-alpha-D-ribose 1-diphosphate: step 9/9. Catalyzes the sequential NAD-dependent oxidations of L-histidinol to L-histidinaldehyde and then to L-histidine. In Caldanaerobacter subterraneus subsp. tengcongensis (strain DSM 15242 / JCM 11007 / NBRC 100824 / MB4) (Thermoanaerobacter tengcongensis), this protein is Histidinol dehydrogenase.